A 99-amino-acid chain; its full sequence is Plastocyanin (99 aa).

One can recognise a Plastocyanin-like domain in the interval 1–99 (IEVLLGGDDG…AGMVGKVTVN (99 aa)). Cu cation is bound by residues His37, Cys84, His87, and Met92.

This sequence belongs to the plastocyanin family. The cofactor is Cu(2+).

The protein resides in the plastid. It localises to the chloroplast thylakoid membrane. Functionally, participates in electron transfer between P700 and the cytochrome b6-f complex in photosystem I. The sequence is that of Plastocyanin (PETE) from Cucurbita pepo (Vegetable marrow).